We begin with the raw amino-acid sequence, 277 residues long: MNSSGLLCDNERPRHRPFLIGVSGGTASGKSTVCAKIMELLGQNKVDHHQRKVTIVSQDSFYRVLTPEQKAKALKGQYNFDHPDAFDTEFMCQTLKDIVEGKVVEVPTYDFVTHSRLPEKICVYPADVVLFEGILVFYTQEVRDMFHMKQFVDTDSDVRLSRRVLRDMNRGRDLEQILTQYTTFVKPAFEEFCLPTKKYADVIIPRGVDNMVAINLIVQHIQDILNGDICKWQRGSVNGHNHGRSLKRGVAEHGENPSGSSSNLTKRPLLEPSTRPH.

Gly-24–Thr-32 contacts ATP. Substrate is bound by residues Asp-81, Tyr-109, His-114, Arg-163, Arg-172, and Gln-180. Asp-209 serves as a coordination point for ATP. Residues Asn-241 to His-277 form a disordered region.

Belongs to the uridine kinase family.

The catalysed reaction is uridine + ATP = UMP + ADP + H(+). It carries out the reaction cytidine + ATP = CMP + ADP + H(+). Its pathway is pyrimidine metabolism; CTP biosynthesis via salvage pathway; CTP from cytidine: step 1/3. It functions in the pathway pyrimidine metabolism; UMP biosynthesis via salvage pathway; UMP from uridine: step 1/1. Its function is as follows. Phosphorylates uridine and cytidine to uridine monophosphate and cytidine monophosphate. Does not phosphorylate deoxyribonucleosides or purine ribonucleosides. Can use ATP or GTP as a phosphate donor. This Danio rerio (Zebrafish) protein is Uridine-cytidine kinase 1 (uck1).